A 58-amino-acid chain; its full sequence is Succinate dehydrogenase subunit 8B, mitochondrial (58 aa).

Component of complex II composed of eight subunits in plants: four classical SDH subunits SDH1, SDH2, SDH3 and SDH4 (a flavoprotein (FP), an iron-sulfur protein (IP), and a cytochrome b composed of a large and a small subunit.), as well as four subunits unknown in mitochondria from bacteria and heterotrophic eukaryotes.

Its subcellular location is the mitochondrion inner membrane. It functions in the pathway carbohydrate metabolism; tricarboxylic acid cycle. In Oryza sativa subsp. japonica (Rice), this protein is Succinate dehydrogenase subunit 8B, mitochondrial.